The chain runs to 133 residues: Small ribosomal subunit protein uS8 (133 aa).

The segment at 1 to 30 is disordered; sequence MANHDPISDMLTRIRNASEKRHETTKVPAS. Positions 16 to 25 are enriched in basic and acidic residues; sequence NASEKRHETT.

The protein belongs to the universal ribosomal protein uS8 family. Part of the 30S ribosomal subunit. Contacts proteins S5 and S12.

Functionally, one of the primary rRNA binding proteins, it binds directly to 16S rRNA central domain where it helps coordinate assembly of the platform of the 30S subunit. The sequence is that of Small ribosomal subunit protein uS8 from Synechococcus sp. (strain CC9902).